The primary structure comprises 133 residues: MRHRKSGRQLNRNSSHRQAMFRNMASSLVRHEIIKTTLPKAKELRRVVEPLITMAKQDSVANRRLAFARTRDKEVVGKLFNELGPRYEERPGGYTRIMKCGFRTGDNAPMAYIELVGRPEVEEVEEVAEEAAE.

The protein belongs to the bacterial ribosomal protein bL17 family. Part of the 50S ribosomal subunit. Contacts protein L32.

The polypeptide is Large ribosomal subunit protein bL17 (Idiomarina loihiensis (strain ATCC BAA-735 / DSM 15497 / L2-TR)).